The following is a 150-amino-acid chain: Urease accessory protein UreE (150 aa).

This sequence belongs to the UreE family.

The protein localises to the cytoplasm. Its function is as follows. Involved in urease metallocenter assembly. Binds nickel. Probably functions as a nickel donor during metallocenter assembly. This chain is Urease accessory protein UreE, found in Staphylococcus aureus (strain MRSA252).